A 256-amino-acid polypeptide reads, in one-letter code: ATG8-interacting protein 1 (256 aa).

Positions 14 to 17 (WEVV) match the AIM (Atg8-family-interacting motif) motif. The chain crosses the membrane as a helical span at residues 181–200 (ANAIWSLFFAAAVTGLVVLG). The AIM (Atg8-family-interacting motif) signature appears at 208 to 211 (WQVL).

As to quaternary structure, interacts with ATG8F. Interacts with ATG8H. Interacts with APE1 and PSBS/NPQ4.

The protein localises to the endoplasmic reticulum membrane. The protein resides in the membrane. It is found in the plastid. It localises to the chloroplast membrane. Involved in a special stress-induced plastid-to-vacuole protein trafficking pathway. Interacts with ATG8F in plastid bodies to subsequently enable their delivery to the vacuole by an autophagic pathway. Interacts with the plastid proteins APE1 and PSBS/NPQ4 and may recruit them as cargo into plastid bodies that may be recognized by the autophagy machinery for degradation in the vacuole. Involved in the alleviation of damage caused by salt stress during plant development, probably through its involvement in plastid-to-vacuole and ER-to-vacuole trafficking. Plays a role in seed germination in response to exogenous abscisic acid (ABA) treatment. This Arabidopsis thaliana (Mouse-ear cress) protein is ATG8-interacting protein 1.